A 175-amino-acid chain; its full sequence is Interleukin-10 (175 aa).

A signal peptide spans 1–21 (MQTCCQALLLLLAACTLPAHC). Disulfide bonds link cysteine 26–cysteine 123 and cysteine 77–cysteine 129.

It belongs to the IL-10 family. Homodimer. Interacts with IL10RA and IL10RB. As to expression, expressed predominantly in bursa of Fabricius and cecal tonsils with low levels in thymus, liver and lung.

Its subcellular location is the secreted. Major immune regulatory cytokine that acts on many cells of the immune system where it has profound anti-inflammatory functions, limiting excessive tissue disruption caused by inflammation. Mechanistically, IL10 binds to its heterotetrameric receptor comprising IL10RA and IL10RB leading to JAK1 and STAT2-mediated phosphorylation of STAT3. In turn, STAT3 translocates to the nucleus where it drives expression of anti-inflammatory mediators. Targets antigen-presenting cells (APCs) such as macrophages and monocytes and inhibits their release of pro-inflammatory cytokines including granulocyte-macrophage colony-stimulating factor /GM-CSF, granulocyte colony-stimulating factor/G-CSF, IL-1 alpha, IL-1 beta, IL-6, IL-8 and TNF-alpha. Also interferes with antigen presentation by reducing the expression of MHC-class II and co-stimulatory molecules, thereby inhibiting their ability to induce T cell activation. In addition, controls the inflammatory response of macrophages by reprogramming essential metabolic pathways including mTOR signaling. This Gallus gallus (Chicken) protein is Interleukin-10.